Consider the following 66-residue polypeptide: Stress-induced protein KIN2 (66 aa).

Residues 1-10 (MSETNKNAFQ) show a composition bias toward polar residues. The segment at 1–20 (MSETNKNAFQAGQAAGKAEE) is disordered. 2 repeats span residues 31-35 (DAAAA) and 49-53 (DAAVG).

In terms of assembly, interacts with DEK3. As to expression, expressed at high levels in embryos and mature seeds.

This chain is Stress-induced protein KIN2, found in Arabidopsis thaliana (Mouse-ear cress).